The primary structure comprises 192 residues: RNA pyrophosphohydrolase (192 aa).

The 144-residue stretch at 6–149 (GYRPNVGIVI…KKDVYRKVMK (144 aa)) folds into the Nudix hydrolase domain. The Nudix box signature appears at 38–59 (GGINDNETAEQAMYRELYEEAG).

The protein belongs to the Nudix hydrolase family. RppH subfamily. A divalent metal cation serves as cofactor.

Functionally, accelerates the degradation of transcripts by removing pyrophosphate from the 5'-end of triphosphorylated RNA, leading to a more labile monophosphorylated state that can stimulate subsequent ribonuclease cleavage. The sequence is that of RNA pyrophosphohydrolase from Histophilus somni (strain 129Pt) (Haemophilus somnus).